The primary structure comprises 159 residues: Protein-export protein SecB (159 aa).

It belongs to the SecB family. As to quaternary structure, homotetramer, a dimer of dimers. One homotetramer interacts with 1 SecA dimer.

The protein localises to the cytoplasm. In terms of biological role, one of the proteins required for the normal export of preproteins out of the cell cytoplasm. It is a molecular chaperone that binds to a subset of precursor proteins, maintaining them in a translocation-competent state. It also specifically binds to its receptor SecA. This Burkholderia vietnamiensis (strain G4 / LMG 22486) (Burkholderia cepacia (strain R1808)) protein is Protein-export protein SecB.